We begin with the raw amino-acid sequence, 544 residues long: Lipid II flippase MurJ (544 aa).

14 helical membrane passes run 21–41, 49–69, 90–110, 127–147, 169–189, 191–211, 241–261, 297–317, 338–358, 375–395, 404–424, 431–451, 471–491, and 500–520; these read ILGM…GGAL, YTLF…KFVS, VMLV…PMFA, VVYV…MSLV, IVRI…FNGG, VIAV…GLVV, MFFE…AIPL, LVMI…PTIT, TILF…GPTY, ILLW…NAAI, FAVV…VPLI, GAIL…FIMI, VLSA…GFFI, and AAIV…YCGY.

Belongs to the polysaccharide synthase family.

It is found in the cell membrane. It participates in cell wall biogenesis; peptidoglycan biosynthesis. Its function is as follows. Involved in peptidoglycan biosynthesis. Transports lipid-linked peptidoglycan precursors from the inner to the outer leaflet of the cytoplasmic membrane. Not essential for growth. This is Lipid II flippase MurJ from Bacillus subtilis (strain 168).